Consider the following 356-residue polypeptide: Phosphoribosyl pyrophosphate synthase-associated protein 1 (356 aa).

N-acetylmethionine is present on Met1. 2 positions are modified to phosphoserine: Ser177 and Ser215.

This sequence belongs to the ribose-phosphate pyrophosphokinase family. Binds to PRPS1 and PRPS2.

Functionally, seems to play a negative regulatory role in 5-phosphoribose 1-diphosphate synthesis. This is Phosphoribosyl pyrophosphate synthase-associated protein 1 (Prpsap1) from Mus musculus (Mouse).